Here is a 638-residue protein sequence, read N- to C-terminus: Ubiquitin-like-specific protease 2 (638 aa).

The segment covering 1–12 has biased composition (basic and acidic residues); it reads MRDSKDALDDKS. Disordered regions lie at residues 1-79 and 238-314; these read MRDS…PKHL and PQKT…TSND. The span at 238 to 249 shows a compositional bias: polar residues; it reads PQKTVRSIVKQT. Positions 250 to 264 are enriched in low complexity; that stretch reads SSPHSSKMPKHSLPS. Polar residues predominate over residues 267–314; the sequence is TPFNSNSGDSLLSRIKNSNQSSSERPTANNGAQEQNQSSSSAGNTSND. Residues His440 and Asp494 contribute to the active site. At Thr526 the chain carries Phosphothreonine. The active site involves Cys544. Residues 610–619 show a composition bias toward polar residues; sequence NERQSLSSGS. The tract at residues 610-638 is disordered; it reads NERQSLSSGSNDEEDKENDDDLAILPITN. A compositionally biased stretch (acidic residues) spans 620 to 631; sequence NDEEDKENDDDL.

It belongs to the peptidase C48 family.

The protein resides in the nucleus. The protein is Ubiquitin-like-specific protease 2 (ulp2) of Schizosaccharomyces pombe (strain 972 / ATCC 24843) (Fission yeast).